Consider the following 552-residue polypeptide: Terpene synthase 5 (552 aa).

3 residues coordinate Mg(2+): Asp307, Asp311, and Glu457. The DDXXD motif motif lies at 307–311 (DDTYD).

Belongs to the terpene synthase family. Requires Mg(2+) as cofactor.

Catalyzes the cyclization of farnesyl diphosphate to multiple sesquiterpenes, such as olefins and sesquiterpene alcohols. In Ricinus communis (Castor bean), this protein is Terpene synthase 5 (TPS5).